Here is a 357-residue protein sequence, read N- to C-terminus: DNA replication and repair protein RecF (357 aa).

30–37 is a binding site for ATP; the sequence is GANGSGKT.

It belongs to the RecF family.

The protein resides in the cytoplasm. The RecF protein is involved in DNA metabolism; it is required for DNA replication and normal SOS inducibility. RecF binds preferentially to single-stranded, linear DNA. It also seems to bind ATP. This Salmonella paratyphi A (strain ATCC 9150 / SARB42) protein is DNA replication and repair protein RecF.